A 205-amino-acid polypeptide reads, in one-letter code: Sarcosine oxidase subunit gamma (205 aa).

It belongs to the SoxG family. In terms of assembly, heterotetramer composed of subunits alpha (SoxA), beta (SoxB), gamma (SoxG) and delta (SoxD).

The protein localises to the cytoplasm. It carries out the reaction sarcosine + (6S)-5,6,7,8-tetrahydrofolate + O2 = (6R)-5,10-methylene-5,6,7,8-tetrahydrofolate + glycine + H2O2. The catalysed reaction is sarcosine + O2 + H2O = formaldehyde + glycine + H2O2. With respect to regulation, inhibited by Zn(2+), Cu(2+), Cd(2+), Hg(2+), Ag(+), p-chloromercuribenzoate (p-CMB), iodoacetamide, N-ethylmaleimide, CN(-), o-phenanthroline and sodium lauryl sulfate. Its function is as follows. In the presence of tetrahydrofolate, catalyzes the oxidative demethylation of sarcosine to yield glycine, 5,10-methylenetetrahydrofolate and hydrogen peroxide. In the absence of tetrahydrofolate, catalyzes the oxidative demethylation of sarcosine to yield glycine, formaldehyde and hydrogen peroxide. Can also use N-methyl-L-alanine and N-ethyl-L-glycine. Is very specific for oxygen as an acceptor. This Corynebacterium sp. (strain U-96) protein is Sarcosine oxidase subunit gamma.